Consider the following 161-residue polypeptide: Large ribosomal subunit protein uL15 (161 aa).

The disordered stretch occupies residues M1 to G43. A compositionally biased stretch (gly residues) spans R21–G37.

Belongs to the universal ribosomal protein uL15 family. In terms of assembly, part of the 50S ribosomal subunit.

Its function is as follows. Binds to the 23S rRNA. This chain is Large ribosomal subunit protein uL15, found in Bradyrhizobium sp. (strain ORS 278).